A 96-amino-acid chain; its full sequence is Co-chaperonin GroES (96 aa).

It belongs to the GroES chaperonin family. In terms of assembly, heptamer of 7 subunits arranged in a ring. Interacts with the chaperonin GroEL.

Its subcellular location is the cytoplasm. Its function is as follows. Together with the chaperonin GroEL, plays an essential role in assisting protein folding. The GroEL-GroES system forms a nano-cage that allows encapsulation of the non-native substrate proteins and provides a physical environment optimized to promote and accelerate protein folding. GroES binds to the apical surface of the GroEL ring, thereby capping the opening of the GroEL channel. The polypeptide is Co-chaperonin GroES (Methylorubrum populi (strain ATCC BAA-705 / NCIMB 13946 / BJ001) (Methylobacterium populi)).